The primary structure comprises 456 residues: Bifunctional protein GlmU (456 aa).

Residues M1–R229 are pyrophosphorylase. Residues L11–G14, K25, Q76, G81–T82, Y103–D105, G140, E154, N169, and N227 contribute to the UDP-N-acetyl-alpha-D-glucosamine site. D105 serves as a coordination point for Mg(2+). N227 provides a ligand contact to Mg(2+). The linker stretch occupies residues L230–A250. Positions G251–K456 are N-acetyltransferase. R333 and K351 together coordinate UDP-N-acetyl-alpha-D-glucosamine. H363 functions as the Proton acceptor in the catalytic mechanism. 2 residues coordinate UDP-N-acetyl-alpha-D-glucosamine: Y366 and N377. Acetyl-CoA contacts are provided by residues A380, N386–Y387, S405, A423, and R440.

In the N-terminal section; belongs to the N-acetylglucosamine-1-phosphate uridyltransferase family. This sequence in the C-terminal section; belongs to the transferase hexapeptide repeat family. In terms of assembly, homotrimer. It depends on Mg(2+) as a cofactor.

Its subcellular location is the cytoplasm. The catalysed reaction is alpha-D-glucosamine 1-phosphate + acetyl-CoA = N-acetyl-alpha-D-glucosamine 1-phosphate + CoA + H(+). It carries out the reaction N-acetyl-alpha-D-glucosamine 1-phosphate + UTP + H(+) = UDP-N-acetyl-alpha-D-glucosamine + diphosphate. It participates in nucleotide-sugar biosynthesis; UDP-N-acetyl-alpha-D-glucosamine biosynthesis; N-acetyl-alpha-D-glucosamine 1-phosphate from alpha-D-glucosamine 6-phosphate (route II): step 2/2. It functions in the pathway nucleotide-sugar biosynthesis; UDP-N-acetyl-alpha-D-glucosamine biosynthesis; UDP-N-acetyl-alpha-D-glucosamine from N-acetyl-alpha-D-glucosamine 1-phosphate: step 1/1. The protein operates within bacterial outer membrane biogenesis; LPS lipid A biosynthesis. In terms of biological role, catalyzes the last two sequential reactions in the de novo biosynthetic pathway for UDP-N-acetylglucosamine (UDP-GlcNAc). The C-terminal domain catalyzes the transfer of acetyl group from acetyl coenzyme A to glucosamine-1-phosphate (GlcN-1-P) to produce N-acetylglucosamine-1-phosphate (GlcNAc-1-P), which is converted into UDP-GlcNAc by the transfer of uridine 5-monophosphate (from uridine 5-triphosphate), a reaction catalyzed by the N-terminal domain. The chain is Bifunctional protein GlmU from Shigella boydii serotype 18 (strain CDC 3083-94 / BS512).